Reading from the N-terminus, the 115-residue chain is Ribonuclease P protein component (115 aa).

This sequence belongs to the RnpA family. As to quaternary structure, consists of a catalytic RNA component (M1 or rnpB) and a protein subunit.

It catalyses the reaction Endonucleolytic cleavage of RNA, removing 5'-extranucleotides from tRNA precursor.. Functionally, RNaseP catalyzes the removal of the 5'-leader sequence from pre-tRNA to produce the mature 5'-terminus. It can also cleave other RNA substrates such as 4.5S RNA. The protein component plays an auxiliary but essential role in vivo by binding to the 5'-leader sequence and broadening the substrate specificity of the ribozyme. The chain is Ribonuclease P protein component from Macrococcus caseolyticus (strain JCSC5402) (Macrococcoides caseolyticum).